The primary structure comprises 166 residues: Ubiquitin-conjugating enzyme E2-18 kDa (166 aa).

Residues 5 to 165 form the UBC core domain; that stretch reads MALRRLMKEY…VRRLARKTLG (161 aa). Cysteine 90 serves as the catalytic Glycyl thioester intermediate. Residue cysteine 90 forms a Glycyl cysteine thioester (Cys-Gly) (interchain with G-Cter in ubiquitin) linkage.

Belongs to the ubiquitin-conjugating enzyme family. Autoubiquitinated at Cys-90; undergoes 'Lys-48'-linked polyubiquitination, which leads to proteasome-dependent protein degradation.

The catalysed reaction is S-ubiquitinyl-[E1 ubiquitin-activating enzyme]-L-cysteine + [E2 ubiquitin-conjugating enzyme]-L-cysteine = [E1 ubiquitin-activating enzyme]-L-cysteine + S-ubiquitinyl-[E2 ubiquitin-conjugating enzyme]-L-cysteine.. The protein operates within protein modification; protein ubiquitination. Catalyzes the covalent attachment of ubiquitin to other proteins. Functions in degradation of misfolded or regulated proteins localized in the endoplasmic reticulum (ER) lumen or membrane via the ubiquitin-proteasome system. Cognate E2 conjugating enzyme for the doa10 ubiquitin ligase complex, which is part of the ERAD-C pathway responsible for the rapid degradation of membrane proteins with misfolded cytoplasmic domains, and of the hrd1 ubiquitin ligase complex, which is part of the ERAD-L and ERAD-M pathways responsible for the rapid degradation of soluble lumenal and membrane proteins with misfolded lumenal domains (ERAD-L), or ER-membrane proteins with misfolded transmembrane domains (ERAD-M). Together with hrd1, required for the degradation of the transcription factor sre1 precursor in the absence of its binding partner scp1. Has a role in the formation of chromatin structures that influence the localization of transcriptional silencing factors. The sequence is that of Ubiquitin-conjugating enzyme E2-18 kDa (ubc7) from Schizosaccharomyces pombe (strain 972 / ATCC 24843) (Fission yeast).